The primary structure comprises 369 residues: MRKQSLVTLLMVLLSLVWLPASAERIRDLVTVQGVRDNALIGYGLVVGLDGSGDQTMQTPFTTQSLSNMLSQLGITVPPGTNMQLKNVAAVMVTAKLPAFSRAGQTIDVVVSSMGNAKSIRGGTLLMTPLKGVDNQVYALAQGNVLVGGAGAAAGGSSVQVNQLAGGRISNGATIERELPTTFGTDGIINLQLNSEDFTLAQQVSDAINRQRGFGSATAIDARTIQVLVPRGGSSQVRFLADIQNIPINVDPGDAKVIINSRTGSVVMNRNVVLDSCAVAQGNLSVVVDKQNIVSQPDTPFGGGQTVVTPNTQISVQQQGGVLQRVNASPNLNNVVRALNSLGATPIDLMSILQAMESAGCLRAKLEII.

Residues 1–23 (MRKQSLVTLLMVLLSLVWLPASA) form the signal peptide.

This sequence belongs to the FlgI family. As to quaternary structure, the basal body constitutes a major portion of the flagellar organelle and consists of four rings (L,P,S, and M) mounted on a central rod.

It localises to the periplasm. The protein resides in the bacterial flagellum basal body. In terms of biological role, assembles around the rod to form the L-ring and probably protects the motor/basal body from shearing forces during rotation. The sequence is that of Flagellar P-ring protein 1 from Yersinia pseudotuberculosis serotype I (strain IP32953).